Consider the following 255-residue polypeptide: Imidazole glycerol phosphate synthase subunit HisF (255 aa).

Active-site residues include Asp12 and Asp131.

This sequence belongs to the HisA/HisF family. As to quaternary structure, heterodimer of HisH and HisF.

The protein resides in the cytoplasm. The enzyme catalyses 5-[(5-phospho-1-deoxy-D-ribulos-1-ylimino)methylamino]-1-(5-phospho-beta-D-ribosyl)imidazole-4-carboxamide + L-glutamine = D-erythro-1-(imidazol-4-yl)glycerol 3-phosphate + 5-amino-1-(5-phospho-beta-D-ribosyl)imidazole-4-carboxamide + L-glutamate + H(+). It functions in the pathway amino-acid biosynthesis; L-histidine biosynthesis; L-histidine from 5-phospho-alpha-D-ribose 1-diphosphate: step 5/9. Functionally, IGPS catalyzes the conversion of PRFAR and glutamine to IGP, AICAR and glutamate. The HisF subunit catalyzes the cyclization activity that produces IGP and AICAR from PRFAR using the ammonia provided by the HisH subunit. The protein is Imidazole glycerol phosphate synthase subunit HisF of Sphingopyxis alaskensis (strain DSM 13593 / LMG 18877 / RB2256) (Sphingomonas alaskensis).